Reading from the N-terminus, the 198-residue chain is Imidazoleglycerol-phosphate dehydratase (198 aa).

This sequence belongs to the imidazoleglycerol-phosphate dehydratase family.

It localises to the cytoplasm. It carries out the reaction D-erythro-1-(imidazol-4-yl)glycerol 3-phosphate = 3-(imidazol-4-yl)-2-oxopropyl phosphate + H2O. It participates in amino-acid biosynthesis; L-histidine biosynthesis; L-histidine from 5-phospho-alpha-D-ribose 1-diphosphate: step 6/9. This is Imidazoleglycerol-phosphate dehydratase from Gluconobacter oxydans (strain 621H) (Gluconobacter suboxydans).